Here is a 510-residue protein sequence, read N- to C-terminus: 2-isopropylmalate synthase (510 aa).

Residues L5–V267 enclose the Pyruvate carboxyltransferase domain. 4 residues coordinate Mn(2+): D14, H202, H204, and N238. Positions R392–V510 are regulatory domain.

Belongs to the alpha-IPM synthase/homocitrate synthase family. LeuA type 1 subfamily. Homodimer. Requires Mn(2+) as cofactor.

It is found in the cytoplasm. The catalysed reaction is 3-methyl-2-oxobutanoate + acetyl-CoA + H2O = (2S)-2-isopropylmalate + CoA + H(+). It participates in amino-acid biosynthesis; L-leucine biosynthesis; L-leucine from 3-methyl-2-oxobutanoate: step 1/4. Catalyzes the condensation of the acetyl group of acetyl-CoA with 3-methyl-2-oxobutanoate (2-ketoisovalerate) to form 3-carboxy-3-hydroxy-4-methylpentanoate (2-isopropylmalate). This is 2-isopropylmalate synthase from Nitrosomonas eutropha (strain DSM 101675 / C91 / Nm57).